Consider the following 61-residue polypeptide: Small ribosomal subunit protein uS14 (61 aa).

Cys24, Cys27, Cys40, and Cys43 together coordinate Zn(2+).

It belongs to the universal ribosomal protein uS14 family. Zinc-binding uS14 subfamily. In terms of assembly, part of the 30S ribosomal subunit. Contacts proteins S3 and S10. It depends on Zn(2+) as a cofactor.

Functionally, binds 16S rRNA, required for the assembly of 30S particles and may also be responsible for determining the conformation of the 16S rRNA at the A site. The polypeptide is Small ribosomal subunit protein uS14 (Thermodesulfovibrio yellowstonii (strain ATCC 51303 / DSM 11347 / YP87)).